Consider the following 85-residue polypeptide: Toxin AahP1005 (85 aa).

An N-terminal signal peptide occupies residues 1–19; it reads MNYLVMISLALLFMTGVES. The LCN-type CS-alpha/beta domain occupies 21-83; sequence KDGYIVDDKN…VSTKKKGGCN (63 aa). Intrachain disulfides connect Cys-31-Cys-82, Cys-35-Cys-55, Cys-41-Cys-65, and Cys-45-Cys-67. Asn-83 carries the asparagine amide modification.

The protein belongs to the long (4 C-C) scorpion toxin superfamily. Sodium channel inhibitor family. Alpha subfamily. Expressed by the venom gland.

The protein localises to the secreted. Alpha toxins bind voltage-independently at site-3 of sodium channels (Nav) and inhibit the inactivation of the activated channels, thereby blocking neuronal transmission. This is Toxin AahP1005 from Androctonus australis (Sahara scorpion).